A 140-amino-acid polypeptide reads, in one-letter code: ATP synthase epsilon chain (140 aa).

This sequence belongs to the ATPase epsilon chain family. In terms of assembly, F-type ATPases have 2 components, CF(1) - the catalytic core - and CF(0) - the membrane proton channel. CF(1) has five subunits: alpha(3), beta(3), gamma(1), delta(1), epsilon(1). CF(0) has three main subunits: a, b and c.

The protein localises to the cell inner membrane. Its function is as follows. Produces ATP from ADP in the presence of a proton gradient across the membrane. This Laribacter hongkongensis (strain HLHK9) protein is ATP synthase epsilon chain.